A 111-amino-acid chain; its full sequence is C-type lectin lectoxin-Enh1 (111 aa).

The signal sequence occupies residues methionine 1–glycine 23. Cysteines 26 and 37 form a disulfide. In terms of domain architecture, C-type lectin spans arginine 33–glutamine 108. The short motif at glutamate 72–asparagine 74 is the Mannose-binding element. Residues glutamate 80, asparagine 95, and aspartate 96 each coordinate Ca(2+). A disulfide bond links cysteine 82 and cysteine 99.

It belongs to the true venom lectin family. As to expression, expressed by the venom gland.

It localises to the secreted. Mannose-binding lectin which recognizes specific carbohydrate structures and agglutinates a variety of animal cells by binding to cell-surface glycoproteins and glycolipids. May be a calcium-dependent lectin. This is C-type lectin lectoxin-Enh1 from Pseudoferania polylepis (Macleay's water snake).